A 100-amino-acid polypeptide reads, in one-letter code: Integration host factor subunit alpha (100 aa).

The protein belongs to the bacterial histone-like protein family. As to quaternary structure, heterodimer of an alpha and a beta chain.

In terms of biological role, this protein is one of the two subunits of integration host factor, a specific DNA-binding protein that functions in genetic recombination as well as in transcriptional and translational control. The sequence is that of Integration host factor subunit alpha from Caulobacter sp. (strain K31).